Here is a 694-residue protein sequence, read N- to C-terminus: Transcriptional activator HAA1 (694 aa).

The segment at residues Met1–Ser40 is a DNA-binding region (copper-fist). Positions 11, 14, 23, and 25 each coordinate Zn(2+). 2 disordered regions span residues Gln104–Met128 and Phe209–Val240. A compositionally biased stretch (polar residues) spans Ser111–Gln126. 4 positions are modified to phosphoserine: Ser125, Ser231, Ser241, and Ser291. Disordered regions lie at residues Phe332 to Phe388, Glu479 to Pro514, Ser566 to Asp588, and Met650 to Gln677. Polar residues predominate over residues Asp336 to Thr349. A compositionally biased stretch (low complexity) spans Asn350–Ser378. Composition is skewed to polar residues over residues Ser566–Ser577 and Ser664–Gln677.

It localises to the nucleus. Its function is as follows. Regulates the transcription of a set of genes, many of which encode membrane proteins. Among the genes regulated are YGR138C and YRO2. Does not seem to be dependent on copper. In Saccharomyces cerevisiae (strain ATCC 204508 / S288c) (Baker's yeast), this protein is Transcriptional activator HAA1 (HAA1).